The following is a 649-amino-acid chain: Thioredoxin reductase 1, cytoplasmic (649 aa).

Methionine 1 is modified (N-acetylmethionine). A disordered region spans residues 1–49; it reads MGCAEGKAVAAAAPTELQTKGKNGDGRRRSAKDHHPGKTLPENPAGFTS. Basic and acidic residues predominate over residues 22 to 36; the sequence is KNGDGRRRSAKDHHP. In terms of domain architecture, Glutaredoxin spans 56–156; sequence RALLQAYIDG…KLLKMNGPED (101 aa). The required for interaction with ESR1 and ESR2 stretch occupies residues 145-149; sequence LQKLL. FAD contacts are provided by residues 172 to 173, 192 to 193, 208 to 209, and 213 to 217; these read SG, DF, TC, and GCIPK. A disulfide bridge connects residues cysteine 209 and cysteine 214. Lysine 218 is modified (N6-succinyllysine). Phosphotyrosine is present on tyrosine 281. FAD is bound by residues 281-282 and threonine 311; that span reads YG. NADP(+)-binding positions include arginine 316, 348 to 354, 371 to 372, arginine 376, 376 to 378, 442 to 443, and lysine 465; these read ASYVALE, RS, RGF, and GR. FAD is bound at residue tyrosine 350. Residues aspartate 484, 491-493, and histidine 622 contribute to the FAD site; that span reads ELT. Glutamate 491 lines the NADP(+) pocket. The active-site Proton acceptor is the histidine 622. The segment at residues 647–648 is a cross-link (cysteinyl-selenocysteine (Cys-Sec)); that stretch reads CU. Residue selenocysteine 648 is a non-standard amino acid, selenocysteine.

It belongs to the class-I pyridine nucleotide-disulfide oxidoreductase family. Homodimer. Interacts with HERC5. As to quaternary structure, interacts with ESR1 and ESR2. FAD serves as cofactor. Post-translationally, the N-terminus is blocked. ISGylated. Expressed predominantly in Leydig cells (at protein level). Also expressed in ovary, spleen, heart, liver, kidney and pancreas and in a number of cancer cell lines. In terms of tissue distribution, widely expressed with highest levels in kidney, testis, uterus, ovary, prostate, placenta and fetal liver.

It localises to the cytoplasm. Its subcellular location is the nucleus. The catalysed reaction is [thioredoxin]-dithiol + NADP(+) = [thioredoxin]-disulfide + NADPH + H(+). The enzyme catalyses H2O2 + NADPH + H(+) = NADP(+) + 2 H2O. Its function is as follows. Reduces disulfideprotein thioredoxin (Trx) to its dithiol-containing form. Homodimeric flavoprotein involved in the regulation of cellular redox reactions, growth and differentiation. Contains a selenocysteine residue at the C-terminal active site that is essential for catalysis. Also has reductase activity on hydrogen peroxide (H2O2). In terms of biological role, induces actin and tubulin polymerization, leading to formation of cell membrane protrusions. Functionally, enhances the transcriptional activity of estrogen receptors ESR1 and ESR2. Enhances the transcriptional activity of the estrogen receptor ESR2 only. Mediates cell death induced by a combination of interferon-beta and retinoic acid. This is Thioredoxin reductase 1, cytoplasmic from Homo sapiens (Human).